A 224-amino-acid polypeptide reads, in one-letter code: MTQDQLKQAVAQAAVDLILPKLDEKSVVGVGTGSTANFFIDALAQHKTAFDGAVASSEATAQRLKGHGIPVYELNSVSELEFYVDGADESDAHLNLIKGGGAALTREKIVAAVAKTFICIADASKLVPVLGAFPLPVEVIPMARSHVARQLVKLGGDPVYREGVVTDNGNVILDVHNLQITNPVELESQINAIVGVVTNGLFAARPADVLLLGTAEGVKTLKAE.

Substrate is bound by residues 32 to 35, 85 to 88, and 98 to 101; these read TGST, DGAD, and KGGG. Catalysis depends on glutamate 107, which acts as the Proton acceptor. Lysine 125 serves as a coordination point for substrate.

The protein belongs to the ribose 5-phosphate isomerase family. Homodimer.

The catalysed reaction is aldehydo-D-ribose 5-phosphate = D-ribulose 5-phosphate. It functions in the pathway carbohydrate degradation; pentose phosphate pathway; D-ribose 5-phosphate from D-ribulose 5-phosphate (non-oxidative stage): step 1/1. Functionally, catalyzes the reversible conversion of ribose-5-phosphate to ribulose 5-phosphate. In Pseudomonas entomophila (strain L48), this protein is Ribose-5-phosphate isomerase A.